Consider the following 141-residue polypeptide: Nucleoside diphosphate kinase (141 aa).

ATP is bound by residues Lys11, Phe59, Arg87, Thr93, Arg104, and Asn114. The active-site Pros-phosphohistidine intermediate is the His117.

It belongs to the NDK family. As to quaternary structure, homotetramer. It depends on Mg(2+) as a cofactor.

Its subcellular location is the cytoplasm. It catalyses the reaction a 2'-deoxyribonucleoside 5'-diphosphate + ATP = a 2'-deoxyribonucleoside 5'-triphosphate + ADP. The enzyme catalyses a ribonucleoside 5'-diphosphate + ATP = a ribonucleoside 5'-triphosphate + ADP. Major role in the synthesis of nucleoside triphosphates other than ATP. The ATP gamma phosphate is transferred to the NDP beta phosphate via a ping-pong mechanism, using a phosphorylated active-site intermediate. This is Nucleoside diphosphate kinase from Herminiimonas arsenicoxydans.